Consider the following 134-residue polypeptide: L-ectoine synthase (134 aa).

The protein belongs to the ectoine synthase family.

The enzyme catalyses (2S)-4-acetamido-2-aminobutanoate = L-ectoine + H2O. It participates in amine and polyamine biosynthesis; ectoine biosynthesis; L-ectoine from L-aspartate 4-semialdehyde: step 3/3. Catalyzes the circularization of gamma-N-acetyl-alpha,gamma-diaminobutyric acid (ADABA) to ectoine (1,4,5,6-tetrahydro-2-methyl-4-pyrimidine carboxylic acid), which is an excellent osmoprotectant. The sequence is that of L-ectoine synthase (ectC) from Sporosarcina pasteurii (Bacillus pasteurii).